Reading from the N-terminus, the 115-residue chain is Phosphoribosyl-AMP cyclohydrolase (115 aa).

Residue aspartate 80 participates in Mg(2+) binding. Zn(2+) is bound at residue cysteine 81. Residues aspartate 82 and aspartate 84 each coordinate Mg(2+). Positions 97 and 104 each coordinate Zn(2+).

It belongs to the PRA-CH family. In terms of assembly, homodimer. Mg(2+) is required as a cofactor. It depends on Zn(2+) as a cofactor.

The protein localises to the cytoplasm. It catalyses the reaction 1-(5-phospho-beta-D-ribosyl)-5'-AMP + H2O = 1-(5-phospho-beta-D-ribosyl)-5-[(5-phospho-beta-D-ribosylamino)methylideneamino]imidazole-4-carboxamide. It functions in the pathway amino-acid biosynthesis; L-histidine biosynthesis; L-histidine from 5-phospho-alpha-D-ribose 1-diphosphate: step 3/9. In terms of biological role, catalyzes the hydrolysis of the adenine ring of phosphoribosyl-AMP. This is Phosphoribosyl-AMP cyclohydrolase from Mycolicibacterium paratuberculosis (strain ATCC BAA-968 / K-10) (Mycobacterium paratuberculosis).